The following is a 126-amino-acid chain: Large ribosomal subunit protein bL17 (126 aa).

It belongs to the bacterial ribosomal protein bL17 family. As to quaternary structure, part of the 50S ribosomal subunit. Contacts protein L32.

This is Large ribosomal subunit protein bL17 from Aliivibrio fischeri (strain ATCC 700601 / ES114) (Vibrio fischeri).